We begin with the raw amino-acid sequence, 468 residues long: Probable serine/threonine-protein phosphatase 2A activator 2 (468 aa).

Low complexity predominate over residues 412 to 424; that stretch reads STTTNNNNNNITS. Residues 412–468 are disordered; sequence STTTNNNNNNITSGDHCNDNEQQCSETHNHDHNHNHNHNHNHPPPPPQQQRSYFPLD.

It belongs to the PTPA-type PPIase family.

It is found in the cytoplasm. The enzyme catalyses [protein]-peptidylproline (omega=180) = [protein]-peptidylproline (omega=0). Functionally, PPIases accelerate the folding of proteins. It catalyzes the cis-trans isomerization of proline imidic peptide bonds in oligopeptides. Acts as a regulatory subunit for PP2A-like phosphatases modulating their activity or substrate specificity, probably by inducing a conformational change in the catalytic subunit, a direct target of the PPIase. In Dictyostelium discoideum (Social amoeba), this protein is Probable serine/threonine-protein phosphatase 2A activator 2 (ppp2r4B).